The primary structure comprises 883 residues: uncharacterized protein (883 aa).

The interval 258–373 (INNQSDNQSN…NQFNKPDNEP (116 aa)) is disordered. Low complexity-rich tracts occupy residues 259-268 (NNQSDNQSNS), 277-317 (EPNG…SNSE), and 324-333 (NEPNTEPNTE). Residues 334–347 (SNGQSNSELNNQSD) are compositionally biased toward polar residues. Low complexity predominate over residues 348–368 (NHPNNEPNSEPNNEPNNQFNK).

It belongs to the mimivirus L137 family.

This is an uncharacterized protein from Acanthamoeba polyphaga mimivirus (APMV).